A 643-amino-acid polypeptide reads, in one-letter code: Threonine--tRNA ligase (643 aa).

Positions M1 to T61 constitute a TGS domain. A catalytic region spans residues D240–P540. Zn(2+) contacts are provided by C335, H386, and H517.

It belongs to the class-II aminoacyl-tRNA synthetase family. In terms of assembly, homodimer. Zn(2+) is required as a cofactor.

Its subcellular location is the cytoplasm. The enzyme catalyses tRNA(Thr) + L-threonine + ATP = L-threonyl-tRNA(Thr) + AMP + diphosphate + H(+). Its function is as follows. Catalyzes the attachment of threonine to tRNA(Thr) in a two-step reaction: L-threonine is first activated by ATP to form Thr-AMP and then transferred to the acceptor end of tRNA(Thr). Also edits incorrectly charged L-seryl-tRNA(Thr). The protein is Threonine--tRNA ligase of Clostridium perfringens (strain SM101 / Type A).